The following is a 583-amino-acid chain: Complement factor I (583 aa).

Positions 1 to 18 (MKLLHVFLLFLCFHLRFC) are cleaved as a signal peptide. Disulfide bonds link Cys-33-Cys-255, Cys-43-Cys-54, Cys-48-Cys-59, Cys-61-Cys-93, Cys-67-Cys-86, Cys-75-Cys-106, Cys-141-Cys-181, Cys-154-Cys-214, Cys-186-Cys-196, Cys-229-Cys-247, Cys-241-Cys-256, Cys-259-Cys-271, Cys-266-Cys-284, Cys-278-Cys-293, Cys-327-Cys-453, Cys-365-Cys-381, and Cys-373-Cys-444. The 54-residue stretch at 55-108 (IEGTCVCKLPYQCPKNGTAVCATNRRSFPTYCQQKSLECLHPGTKFLNNGTCTA) folds into the Kazal-like domain. Asn-70 is a glycosylation site (N-linked (GlcNAc...) asparagine). Asn-103 carries an N-linked (GlcNAc...) (complex) asparagine glycan. The SRCR domain maps to 114 to 212 (VSLKHGNTDS…TMGYQDFADV (99 aa)). Asn-177 carries N-linked (GlcNAc...) asparagine glycosylation. LDL-receptor class A domains lie at 213 to 257 (VCYT…LCCK) and 258 to 294 (ACQG…VGCA). 6 residues coordinate Ca(2+): Lys-239, Asp-242, Ile-244, Asp-246, Asp-252, and Glu-253. 6 residues coordinate Ca(2+): Tyr-276, Asn-279, Glu-281, Asp-283, Asp-289, and Glu-290. The Peptidase S1 domain maps to 340-574 (IVGGKRAQLG…YFDWISYHVG (235 aa)). Residues His-380 and Asp-429 each act as charge relay system in the active site. N-linked (GlcNAc...) asparagine glycans are attached at residues Asn-464 and Asn-494. Cystine bridges form between Cys-467–Cys-531, Cys-495–Cys-510, and Cys-521–Cys-550. The active-site Charge relay system is the Ser-525. Asn-536 is a glycosylation site (N-linked (GlcNAc...) asparagine).

This sequence belongs to the peptidase S1 family. As to quaternary structure, heterodimer of a light and heavy chains; disulfide-linked. The fully processed and mature protein circulates as a zymogen, and is allosterically activated by substrate-induced remodeling of the active site. Interacts with C3b. Interacts with complement factor H. In terms of assembly, (Microbial infection) Interacts with Staphylococcus aureus clumping factor A/ClfA; this interaction enhances cleavage of C3b into iC3b by CFI. In terms of tissue distribution, expressed in the liver by hepatocytes. Also present in other cells such as monocytes, fibroblasts or keratinocytes.

It is found in the secreted. It localises to the extracellular space. The catalysed reaction is Inactivates complement subcomponents C3b, iC3b and C4b by proteolytic cleavage.. Its function is as follows. Trypsin-like serine protease that plays an essential role in regulating the immune response by controlling all complement pathways. Inhibits these pathways by cleaving three peptide bonds in the alpha-chain of C3b and two bonds in the alpha-chain of C4b thereby inactivating these proteins. Essential cofactors for these reactions include factor H and C4BP in the fluid phase and membrane cofactor protein/CD46 and CR1 on cell surfaces. The presence of these cofactors on healthy cells allows degradation of deposited C3b by CFI in order to prevent undesired complement activation, while in apoptotic cells or microbes, the absence of such cofactors leads to C3b-mediated complement activation and subsequent opsonization. The polypeptide is Complement factor I (CFI) (Homo sapiens (Human)).